A 193-amino-acid polypeptide reads, in one-letter code: Protein SINE3 (193 aa).

Residues 15–35 (SELGAKRLKDPEMKNRKVTTE) are disordered. Residues 18–35 (GAKRLKDPEMKNRKVTTE) are compositionally biased toward basic and acidic residues. Residues 155-193 (VTVKFRIVLLSFILWAILAAIVVFFSSGEERAYRGPLPT) enclose the KASH domain. A helical transmembrane segment spans residues 161-181 (IVLLSFILWAILAAIVVFFSS). Positions 190–193 (PLPT) match the Required for nuclear localization motif.

Interacts with SUN1 and SUN2.

The protein resides in the nucleus membrane. The sequence is that of Protein SINE3 from Arabidopsis thaliana (Mouse-ear cress).